The chain runs to 373 residues: Gametogenetin-binding protein 1 (373 aa).

Disordered stretches follow at residues 26 to 113 and 237 to 268; these read VGSK…GSQT and KAQR…AVDE. A compositionally biased stretch (polar residues) spans 36–49; that stretch reads NRPLNRSQPSSSPE. Residues 226-373 are required for induction of mitochondrial fragmentation; it reads LYKQLQKSAM…DEMGNWPPPE (148 aa). Over residues 254 to 263 the composition is skewed to basic and acidic residues; it reads SPTEERGERE. The segment at 301–373 is interaction with GGN; that stretch reads KTFRSTDTVG…DEMGNWPPPE (73 aa).

As to quaternary structure, interacts with CCDC159. Interacts with GGN.

The protein resides in the cytoplasm. It is found in the membrane. The protein localises to the golgi apparatus. Its subcellular location is the mitochondrion intermembrane space. Its function is as follows. Induces mitochondrial fragmentation, possibly by promoting DNM1L-dependent fission and may play a role in mitochondrial morphogenesis during spermatogenesis. In Rattus norvegicus (Rat), this protein is Gametogenetin-binding protein 1 (Ggnbp1).